A 464-amino-acid chain; its full sequence is tRNA-2-methylthio-N(6)-dimethylallyladenosine synthase (464 aa).

Positions 19–135 (GSYWITTFGC…LENLLGKVDL (117 aa)) constitute an MTTase N-terminal domain. [4Fe-4S] cluster contacts are provided by cysteine 28, cysteine 64, cysteine 98, cysteine 170, cysteine 174, and cysteine 177. One can recognise a Radical SAM core domain in the interval 156–394 (RESSICGWVN…DLVEKTARSR (239 aa)). Positions 396-464 (KRYINNIESV…PFSLTGELYL (69 aa)) constitute a TRAM domain.

It belongs to the methylthiotransferase family. MiaB subfamily. Monomer. Requires [4Fe-4S] cluster as cofactor.

Its subcellular location is the cytoplasm. It carries out the reaction N(6)-dimethylallyladenosine(37) in tRNA + (sulfur carrier)-SH + AH2 + 2 S-adenosyl-L-methionine = 2-methylsulfanyl-N(6)-dimethylallyladenosine(37) in tRNA + (sulfur carrier)-H + 5'-deoxyadenosine + L-methionine + A + S-adenosyl-L-homocysteine + 2 H(+). In terms of biological role, catalyzes the methylthiolation of N6-(dimethylallyl)adenosine (i(6)A), leading to the formation of 2-methylthio-N6-(dimethylallyl)adenosine (ms(2)i(6)A) at position 37 in tRNAs that read codons beginning with uridine. This is tRNA-2-methylthio-N(6)-dimethylallyladenosine synthase from Prochlorococcus marinus (strain AS9601).